Reading from the N-terminus, the 223-residue chain is Fibroblast growth factor-binding protein 2 (223 aa).

A signal peptide spans 1-19 (MKFVPCLLLVTLSCLGTLG). Residues 23 to 45 (RQKQGSTGEEFHFQTGGRDSCTM) are disordered. 3 cysteine pairs are disulfide-bonded: Cys-43-Cys-63, Cys-72-Cys-106, and Cys-81-Cys-117. A disordered region spans residues 120 to 201 (AGPQAHMQQV…PGGNEEAKKK (82 aa)). Polar residues predominate over residues 125–144 (HMQQVTSSLKGSPEPNQQPE). Over residues 175–186 (AKPTTRPTAKPT) the composition is skewed to low complexity. The cysteines at positions 206 and 214 are disulfide-linked.

This sequence belongs to the fibroblast growth factor-binding protein family. In terms of tissue distribution, expressed in serum, peripheral leukocytes and cytotoxic T-lymphocytes, but not in granulocytes and monocytes (at protein level).

The protein resides in the secreted. Its subcellular location is the extracellular space. The sequence is that of Fibroblast growth factor-binding protein 2 (FGFBP2) from Homo sapiens (Human).